We begin with the raw amino-acid sequence, 513 residues long: Probable DNA ligase (513 aa).

Residue Glu-213 participates in ATP binding. Residue Lys-215 is the N6-AMP-lysine intermediate of the active site. ATP-binding residues include Arg-220, Arg-235, Glu-264, Phe-304, Arg-376, and Lys-382.

It belongs to the ATP-dependent DNA ligase family. It depends on Mg(2+) as a cofactor.

It carries out the reaction ATP + (deoxyribonucleotide)n-3'-hydroxyl + 5'-phospho-(deoxyribonucleotide)m = (deoxyribonucleotide)n+m + AMP + diphosphate.. DNA ligase that seals nicks in double-stranded DNA during DNA replication, DNA recombination and DNA repair. The sequence is that of Probable DNA ligase from Anaeromyxobacter dehalogenans (strain 2CP-C).